The following is a 106-amino-acid chain: 3-phenylpropionate/cinnamic acid dioxygenase ferredoxin subunit (106 aa).

The Rieske domain maps to 4-99; sequence IYACPVADVP…VHVEGGDIFI (96 aa). Residues Cys42, His44, Cys62, and His65 each coordinate [2Fe-2S] cluster.

The protein belongs to the bacterial ring-hydroxylating dioxygenase ferredoxin component family. In terms of assembly, this dioxygenase system consists of four proteins: the two subunits of the hydroxylase component (HcaE and HcaF), a ferredoxin (HcaC) and a ferredoxin reductase (HcaD). [2Fe-2S] cluster is required as a cofactor.

It functions in the pathway aromatic compound metabolism; 3-phenylpropanoate degradation. Its function is as follows. Part of the multicomponent 3-phenylpropionate dioxygenase, that converts 3-phenylpropionic acid (PP) and cinnamic acid (CI) into 3-phenylpropionate-dihydrodiol (PP-dihydrodiol) and cinnamic acid-dihydrodiol (CI-dihydrodiol), respectively. This protein seems to be a 2Fe-2S ferredoxin. The polypeptide is 3-phenylpropionate/cinnamic acid dioxygenase ferredoxin subunit (Shigella flexneri serotype 5b (strain 8401)).